Reading from the N-terminus, the 2121-residue chain is PAM2 domain-containing protein UPA2 (2121 aa).

Residues 1–17 (MEGSSLNVAAPVFKPSG) carry the PAM2 1 motif. Disordered stretches follow at residues 14–46 (KPSGAANSFTPAPSQPAPPTLLSSSGPDAAVHA), 262–302 (QPED…SALT), 375–397 (AATTDHEPRSPLAHQGIPLPPST), 475–507 (ARRRGDSSDLNLRPSLKTTHNHTMSLGLPSSGG), 522–543 (ANSDEGPSKPPSEAQDLPQKPL), and 586–819 (DLGR…QFSR). Positions 339–599 (PWPYSLGLPD…GFGYEPQSPN (261 aa)) are effector domain. A compositionally biased stretch (polar residues) spans 596 to 607 (QSPNAAPNGTTS). 2 stretches are compositionally biased toward acidic residues: residues 626–637 (EENDELGFDGEE) and 646–658 (EDADASDFEEEPN). Over residues 679 to 689 (DGHDRYADDNQ) the composition is skewed to basic and acidic residues. The segment covering 690–712 (SHASNDDSLQDSLTPSDEQFSNP) has biased composition (polar residues). Residues 719-735 (REERILRRQHRAAERAA) show a composition bias toward basic and acidic residues. Residues 736-745 (RRERKQRQRG) show a composition bias toward basic residues. Composition is skewed to polar residues over residues 749 to 758 (SDNTLPSSSI) and 777 to 788 (NPRNGNTISNPS). 2 short sequence motifs (PAM2) span residues 858–874 (SGISLLNPDAKEFKFGG) and 920–937 (TNAAHLNVGAAPFTPGLF). Residues 950–960 (NSLSASPSIAV) show a composition bias toward polar residues. The tract at residues 950–1012 (NSLSASPSIA…PSPPRPKASA (63 aa)) is disordered. Over residues 966–981 (GADHRETENRDMQGRE) the composition is skewed to basic and acidic residues. The short motif at 1046-1063 (SHESRLTADAPSFVPTWA) is the PAM2 4 element. Disordered stretches follow at residues 1076–1096 (KRPSLPDWDQQGQQAVDKDLP), 1119–1261 (SKDD…EEES), and 1337–1369 (SHARRASDETQSTIRPLRQRNSSSDVKTANSSL). A compositionally biased stretch (polar residues) spans 1198 to 1207 (HSPSISQTSD). Residues 1248–1261 (GGNDEDDYEDEEES) show a composition bias toward acidic residues. Positions 1345–1369 (ETQSTIRPLRQRNSSSDVKTANSSL) are enriched in polar residues. The stretch at 1783–2054 (LEKQAQANAD…EAKLQTLTAS (272 aa)) forms a coiled coil. The disordered stretch occupies residues 2099–2121 (SFASTAGSQGKKEVEVDEGGWWS). Residues 2118 to 2120 (GWW) carry the GWW motif.

It belongs to the UPA1 PAM2 domain-binding protein family. Might form homodimers via its C-terminal coiled-coil domain. Part of large ribonucleoprotein complexes (mRNPs) containing RNA-binding proteins RRM4 and PAB1, endosome-binding protein UPA1, core scaffold protein UPA2 and associated factor GRP1. Interacts (via PAM2 motifs) with PAB1.

The protein localises to the cytoplasm. Its subcellular location is the cytoskeleton. It is found in the endosome. Functionally, core component of endosomal mRNA transport and appears to carry out crucial scaffolding functions. The endosomal mRNA transport regulates polarity of the infectious hyphae by transporting a broad spectrum of cargo mRNAs from the nucleus to cell poles. The protein is PAM2 domain-containing protein UPA2 of Mycosarcoma maydis (Corn smut fungus).